Here is a 93-residue protein sequence, read N- to C-terminus: Pyrimidine/purine nucleoside phosphorylase (93 aa).

It belongs to the nucleoside phosphorylase PpnP family.

It carries out the reaction a purine D-ribonucleoside + phosphate = a purine nucleobase + alpha-D-ribose 1-phosphate. It catalyses the reaction adenosine + phosphate = alpha-D-ribose 1-phosphate + adenine. The enzyme catalyses cytidine + phosphate = cytosine + alpha-D-ribose 1-phosphate. The catalysed reaction is guanosine + phosphate = alpha-D-ribose 1-phosphate + guanine. It carries out the reaction inosine + phosphate = alpha-D-ribose 1-phosphate + hypoxanthine. It catalyses the reaction thymidine + phosphate = 2-deoxy-alpha-D-ribose 1-phosphate + thymine. The enzyme catalyses uridine + phosphate = alpha-D-ribose 1-phosphate + uracil. The catalysed reaction is xanthosine + phosphate = alpha-D-ribose 1-phosphate + xanthine. Catalyzes the phosphorolysis of diverse nucleosides, yielding D-ribose 1-phosphate and the respective free bases. Can use uridine, adenosine, guanosine, cytidine, thymidine, inosine and xanthosine as substrates. Also catalyzes the reverse reactions. The chain is Pyrimidine/purine nucleoside phosphorylase from Aliivibrio salmonicida (strain LFI1238) (Vibrio salmonicida (strain LFI1238)).